An 82-amino-acid polypeptide reads, in one-letter code: High-potential iron-sulfur protein (82 aa).

[4Fe-4S] cluster-binding residues include C42, C45, C60, and C74.

It belongs to the high-potential iron-sulfur protein (HiPIP) family. Homodimer.

The protein localises to the periplasm. Functionally, specific class of high-redox-potential 4Fe-4S ferredoxins. Functions in anaerobic electron transport in most purple and in some other photosynthetic bacteria and in at least one genus (Paracoccus) of halophilic, denitrifying bacteria. This Marichromatium purpuratum (Chromatium purpuratum) protein is High-potential iron-sulfur protein (hip).